The primary structure comprises 419 residues: UDP-N-acetylglucosamine 1-carboxyvinyltransferase (419 aa).

Residue 22 to 23 (KN) coordinates phosphoenolpyruvate. Arginine 95 is a UDP-N-acetyl-alpha-D-glucosamine binding site. Residue cysteine 119 is the Proton donor of the active site. 2-(S-cysteinyl)pyruvic acid O-phosphothioketal is present on cysteine 119. UDP-N-acetyl-alpha-D-glucosamine is bound by residues 164–167 (KVSV), aspartate 308, and isoleucine 330.

This sequence belongs to the EPSP synthase family. MurA subfamily.

Its subcellular location is the cytoplasm. The catalysed reaction is phosphoenolpyruvate + UDP-N-acetyl-alpha-D-glucosamine = UDP-N-acetyl-3-O-(1-carboxyvinyl)-alpha-D-glucosamine + phosphate. It functions in the pathway cell wall biogenesis; peptidoglycan biosynthesis. Cell wall formation. Adds enolpyruvyl to UDP-N-acetylglucosamine. This is UDP-N-acetylglucosamine 1-carboxyvinyltransferase from Rickettsia felis (strain ATCC VR-1525 / URRWXCal2) (Rickettsia azadi).